The primary structure comprises 342 residues: Anthranilate phosphoribosyltransferase (342 aa).

Residues Gly-83, 86–87 (GD), Thr-91, 93–96 (NIST), 111–119 (KHGGRSVSS), and Ser-123 each bind 5-phospho-alpha-D-ribose 1-diphosphate. Position 83 (Gly-83) interacts with anthranilate. Residue Ser-95 coordinates Mg(2+). Position 169 (Arg-169) interacts with anthranilate. Asp-228 and Glu-229 together coordinate Mg(2+).

Belongs to the anthranilate phosphoribosyltransferase family. Homodimer. Mg(2+) is required as a cofactor.

The catalysed reaction is N-(5-phospho-beta-D-ribosyl)anthranilate + diphosphate = 5-phospho-alpha-D-ribose 1-diphosphate + anthranilate. It participates in amino-acid biosynthesis; L-tryptophan biosynthesis; L-tryptophan from chorismate: step 2/5. Functionally, catalyzes the transfer of the phosphoribosyl group of 5-phosphorylribose-1-pyrophosphate (PRPP) to anthranilate to yield N-(5'-phosphoribosyl)-anthranilate (PRA). This is Anthranilate phosphoribosyltransferase from Laribacter hongkongensis (strain HLHK9).